We begin with the raw amino-acid sequence, 422 residues long: Enolase (422 aa).

Gln162 lines the (2R)-2-phosphoglycerate pocket. The Proton donor role is filled by Glu204. Asp241, Glu284, and Asp311 together coordinate Mg(2+). Residues Lys336, Arg365, Ser366, and Lys387 each contribute to the (2R)-2-phosphoglycerate site. Lys336 serves as the catalytic Proton acceptor.

Belongs to the enolase family. In terms of assembly, component of the RNA degradosome, a multiprotein complex involved in RNA processing and mRNA degradation. Mg(2+) serves as cofactor.

It is found in the cytoplasm. Its subcellular location is the secreted. The protein resides in the cell surface. It carries out the reaction (2R)-2-phosphoglycerate = phosphoenolpyruvate + H2O. Its pathway is carbohydrate degradation; glycolysis; pyruvate from D-glyceraldehyde 3-phosphate: step 4/5. Its function is as follows. Catalyzes the reversible conversion of 2-phosphoglycerate (2-PG) into phosphoenolpyruvate (PEP). It is essential for the degradation of carbohydrates via glycolysis. The polypeptide is Enolase (Legionella pneumophila (strain Corby)).